Reading from the N-terminus, the 392-residue chain is Formate-dependent phosphoribosylglycinamide formyltransferase (392 aa).

N(1)-(5-phospho-beta-D-ribosyl)glycinamide-binding positions include 22–23 and E82; that span reads EL. ATP is bound by residues R114, K155, 160 to 165, 195 to 198, and E203; these read SSGKGQ and EGLV. Residues 119 to 308 form the ATP-grasp domain; sequence RLAAETLGVP…EFALHVRAFL (190 aa). Residues E267 and E279 each contribute to the Mg(2+) site. N(1)-(5-phospho-beta-D-ribosyl)glycinamide-binding positions include D286, K355, and 362–363; that span reads RR.

This sequence belongs to the PurK/PurT family. Homodimer.

The enzyme catalyses N(1)-(5-phospho-beta-D-ribosyl)glycinamide + formate + ATP = N(2)-formyl-N(1)-(5-phospho-beta-D-ribosyl)glycinamide + ADP + phosphate + H(+). It participates in purine metabolism; IMP biosynthesis via de novo pathway; N(2)-formyl-N(1)-(5-phospho-D-ribosyl)glycinamide from N(1)-(5-phospho-D-ribosyl)glycinamide (formate route): step 1/1. In terms of biological role, involved in the de novo purine biosynthesis. Catalyzes the transfer of formate to 5-phospho-ribosyl-glycinamide (GAR), producing 5-phospho-ribosyl-N-formylglycinamide (FGAR). Formate is provided by PurU via hydrolysis of 10-formyl-tetrahydrofolate. In Pectobacterium carotovorum subsp. carotovorum (strain PC1), this protein is Formate-dependent phosphoribosylglycinamide formyltransferase.